A 908-amino-acid chain; its full sequence is Protein translocase subunit SecA (908 aa).

Residues Gln87, 105-109, and Asp512 each bind ATP; that span reads GEGKT. A disordered region spans residues 865–908; sequence GGDDGSDEMMAHTPMIRDGDKVGRNDPCPCGSGRKYKQCHGKLS. Positions 879–888 are enriched in basic and acidic residues; the sequence is MIRDGDKVGR. Zn(2+)-binding residues include Cys892, Cys894, Cys903, and His904. A compositionally biased stretch (basic residues) spans 898 to 908; that stretch reads RKYKQCHGKLS.

It belongs to the SecA family. As to quaternary structure, monomer and homodimer. Part of the essential Sec protein translocation apparatus which comprises SecA, SecYEG and auxiliary proteins SecDF-YajC and YidC. It depends on Zn(2+) as a cofactor.

It localises to the cell inner membrane. The protein localises to the cytoplasm. It catalyses the reaction ATP + H2O + cellular proteinSide 1 = ADP + phosphate + cellular proteinSide 2.. Part of the Sec protein translocase complex. Interacts with the SecYEG preprotein conducting channel. Has a central role in coupling the hydrolysis of ATP to the transfer of proteins into and across the cell membrane, serving both as a receptor for the preprotein-SecB complex and as an ATP-driven molecular motor driving the stepwise translocation of polypeptide chains across the membrane. In Shewanella sp. (strain MR-4), this protein is Protein translocase subunit SecA.